The sequence spans 334 residues: D-fructose 1,6-bisphosphatase class 2/sedoheptulose 1,7-bisphosphatase (334 aa).

Residues Asp-33, Glu-57, Asp-85, and Glu-88 each coordinate Mn(2+). Residues 88–90 (EGT), Tyr-119, 164–166 (RAR), and 186–188 (DGD) each bind substrate. Glu-213 serves as a coordination point for Mn(2+).

It belongs to the FBPase class 2 family. As to quaternary structure, homotetramer. Mn(2+) serves as cofactor.

The enzyme catalyses beta-D-fructose 1,6-bisphosphate + H2O = beta-D-fructose 6-phosphate + phosphate. It carries out the reaction D-sedoheptulose 1,7-bisphosphate + H2O = D-sedoheptulose 7-phosphate + phosphate. Its pathway is carbohydrate biosynthesis; Calvin cycle. Its function is as follows. Catalyzes the hydrolysis of fructose 1,6-bisphosphate (Fru 1,6-P2) and sedoheptulose 1,7-bisphosphate (Sed 1,7-P2) to fructose 6-phosphate and sedoheptulose 7-phosphate, respectively. The chain is D-fructose 1,6-bisphosphatase class 2/sedoheptulose 1,7-bisphosphatase from Prochlorococcus marinus (strain MIT 9303).